A 140-amino-acid polypeptide reads, in one-letter code: Large ribosomal subunit protein uL14 (140 aa).

This sequence belongs to the universal ribosomal protein uL14 family.

This chain is Large ribosomal subunit protein uL14 (rpl-23), found in Caenorhabditis elegans.